The chain runs to 810 residues: Chloride channel protein (810 aa).

Residues 2–48 (SHEKNEASGNPEAQSWKAQEAMLGVKTEVSRWRAVKNCLYRHLVKVL) are Cytoplasmic-facing. 2 consecutive transmembrane segments (helical) span residues 49-86 (GEDW…LFAM) and 93-116 (LQYL…CQIV). A Selectivity filter part_1 motif is present at residues 122 to 126 (GSGIP). Ser123 is a binding site for chloride. The helical intramembrane region spans 125–132 (IPELKTII). 2 helical membrane-spanning segments follow: residues 141–160 (LTLR…LSAG) and 166–184 (EGPF…NQLL). A Selectivity filter part_2 motif is present at residues 164–168 (GKEGP). Intramembrane regions (helical) lie at residues 201 to 213 (ILTV…ISCC) and 217 to 225 (PLAGVLFSI). 3 helical membrane passes run 237–254 (YWRG…FRVL), 283–311 (LPAF…IVFM), and 320–339 (ILKK…LATL). N-linked (GlcNAc...) asparagine glycosylation occurs at Asn365. Helical transmembrane passes span 389–408 (NIFI…AALA) and 416–439 (GAFV…MALL). The Selectivity filter part_3 motif lies at 416–420 (GAFVP). Phe418 contributes to the chloride binding site. An intramembrane region (helical) is located at residues 456-470 (GEYAVIGAAAMTGAV). Residues 471–472 (TH) constitute an intramembrane region (note=Loop between two helices). An intramembrane region (helical) is located at residues 473–484 (AVSTAVICFELT). An intramembrane region (note=Loop between two helices) is located at residues 485-489 (GQISH). Residues 490-506 (VLPMMVAVILANMVAQG) form a helical membrane-spanning segment. The Cytoplasmic segment spans residues 507-810 (LQPSLYDSII…RTATSNSSGK (304 aa)). A chloride-binding site is contributed by Tyr512. In terms of domain architecture, CBS 1 spans 543–601 (MVRDVTSIASTSTYGDLLHVLRQTKLKFFPFVDTPETNTLLGSIERTEVEGLLQRRISA). Disordered stretches follow at residues 604–631 (RQPA…DVPG) and 658–688 (KVQT…KHKG). A CBS 2 domain is found at 724–781 (IDQSPFQLVEGTSLQKTHTLFSLLGLDRAYVTSMGKLVGVVALAEIQAAIEGSYQKGF).

This sequence belongs to the chloride channel (TC 2.A.49) family. ClC-0 subfamily. In terms of assembly, homodimer. Each subunit has channel activity ('Double barreled channel').

The protein resides in the membrane. Functionally, voltage-gated chloride channel. This channel is thought to ensure the high conductance of the non-innervated membrane of the electrocyte necessary for efficient current generation caused by sodium influx through the acetylcholine receptor at the innervated membrane. This is Chloride channel protein from Tetronarce californica (Pacific electric ray).